The chain runs to 401 residues: L-methionine gamma-lyase (401 aa).

Pyridoxal 5'-phosphate-binding positions include 59–61 (YTR) and 89–90 (GI). Residue tyrosine 114 participates in substrate binding. Residue 210–212 (SAT) participates in pyridoxal 5'-phosphate binding. Residue lysine 213 is modified to N6-(pyridoxal phosphate)lysine. Substrate is bound at residue arginine 377.

This sequence belongs to the trans-sulfuration enzymes family. L-methionine gamma-lyase subfamily. Homotetramer; dimer of active dimers. Pyridoxal 5'-phosphate is required as a cofactor.

It catalyses the reaction L-methionine + H2O = methanethiol + 2-oxobutanoate + NH4(+). The catalysed reaction is L-homocysteine + H2O = 2-oxobutanoate + hydrogen sulfide + NH4(+) + H(+). Its function is as follows. Catalyzes the alpha,gamma-elimination of L-methionine to produce methanethiol, 2-oxobutanoate and ammonia; methanethiol (methyl mercaptan) is considered to be one of the main causes of the oral malodor associated with periodontitis and may also play a role in the pathogenicity of T.denticola. Also displays homocysteine desulfhydrase activity, degrading homocysteine to produce hydrogen sulfide, 2-oxobutanoate and ammonia. This is L-methionine gamma-lyase from Treponema denticola (strain ATCC 35405 / DSM 14222 / CIP 103919 / JCM 8153 / KCTC 15104).